We begin with the raw amino-acid sequence, 273 residues long: MENKKSFFHLHLISDSTGETLMSAGRAVSAQFHTSMPVEHVYPMIRNQKQLAQVIDLIDKEPGIVLYTIVDQQLAEFLDLRCHAIGVPCVNVLEPIIGIFQTYLGAPSRRRVGAQHALNADYFARIEALNFAMDHDDGQMPETYDDADVVIIGISRTSKTPTSIYLANRGIKTANIPVVPNVPLPESLYAATRPLIVGLVATSDRISQVRENRDLGTTGGFDGGRYTDRATIMEELKYARALCARNNWPLIDVTRRSIEETAAAILALRPRTR.

ADP is bound at residue 153–160 (GISRTSKT).

This sequence belongs to the pyruvate, phosphate/water dikinase regulatory protein family. PDRP subfamily.

The enzyme catalyses N(tele)-phospho-L-histidyl/L-threonyl-[pyruvate, phosphate dikinase] + ADP = N(tele)-phospho-L-histidyl/O-phospho-L-threonyl-[pyruvate, phosphate dikinase] + AMP + H(+). It catalyses the reaction N(tele)-phospho-L-histidyl/O-phospho-L-threonyl-[pyruvate, phosphate dikinase] + phosphate + H(+) = N(tele)-phospho-L-histidyl/L-threonyl-[pyruvate, phosphate dikinase] + diphosphate. Functionally, bifunctional serine/threonine kinase and phosphorylase involved in the regulation of the pyruvate, phosphate dikinase (PPDK) by catalyzing its phosphorylation/dephosphorylation. In Agrobacterium fabrum (strain C58 / ATCC 33970) (Agrobacterium tumefaciens (strain C58)), this protein is Putative pyruvate, phosphate dikinase regulatory protein.